Here is a 529-residue protein sequence, read N- to C-terminus: Beta-hexosaminidase subunit alpha (529 aa).

A signal peptide spans 1–22 (MASSRLWFSLLLAAALAGRATA). A propeptide spanning residues 23–88 (LWPWPQNIQT…PRPYLTGKRH (66 aa)) is cleaved from the precursor. A disulfide bridge connects residues Cys58 and Cys104. N-linked (GlcNAc...) asparagine glycans are attached at residues Asn115, Asn157, and Asn295. Cysteines 277 and 328 form a disulfide. The active-site Proton donor is Glu323. The tract at residues 423–424 (NR) is critical for hydrolysis GM2 gangliosides. An intrachain disulfide couples Cys505 to Cys522.

This sequence belongs to the glycosyl hydrolase 20 family. In terms of assembly, there are 3 beta-hexosaminidase isozymes: isozyme A (hexosaminidase A) is a heterodimer composed of one subunit alpha and one subunit beta (chain A and B); isozyme B (hexosaminidase B) is a homodimer of two beta subunits (two chains A and B); isozyme S (hexosaminidase S) is a homodimer of two alpha subunits. The composition of the dimer (isozyme A versus isozyme S) has a significant effect on the substrate specificity of the alpha subunit active site.

Its subcellular location is the lysosome. The catalysed reaction is Hydrolysis of terminal non-reducing N-acetyl-D-hexosamine residues in N-acetyl-beta-D-hexosaminides.. It catalyses the reaction N-acetyl-beta-D-galactosaminyl-(1-&gt;4)-beta-D-3-sulfogalactosyl-(1-&gt;4)-beta-D-glucosyl-(1&lt;-&gt;1')-ceramide + H2O = a beta-D-3-sulfogalactosyl-(1-&gt;4)-beta-D-glucosyl-(1&lt;-&gt;1')-ceramide + N-acetyl-beta-D-galactosamine. The enzyme catalyses a ganglioside GM2 (d18:1(4E)) + H2O = a ganglioside GM3 (d18:1(4E)) + N-acetyl-beta-D-galactosamine. It carries out the reaction a ganglioside GM2 + H2O = a ganglioside GM3 + N-acetyl-beta-D-galactosamine. The catalysed reaction is beta-D-GalNAc-(1-&gt;4)-alpha-L-IdoA-(1-&gt;3)-beta-D-GalNAc-4-sulfate-(1-&gt;4)-alpha-L-IdoA-(1-&gt;3)-D-GalNAc-4-sulfate + H2O = alpha-L-IdoA-(1-&gt;3)-beta-D-GalNAc-4-sulfate-(1-&gt;4)-alpha-L-IdoA-(1-&gt;3)-D-GalNAc-4-sulfate + N-acetyl-D-galactosamine. It catalyses the reaction N-acetyl-beta-D-6-sulfogalactosaminyl-(1-&gt;4)-alpha-L-iduronyl-(1-&gt;3)-N-acetyl-D-6-sulfogalactosamine + H2O = alpha-L-iduronyl-(1-&gt;3)-N-acetyl-D-6-sulfogalactosamine + N-acetyl-D-6-sulfogalactosamine. With respect to regulation, addition of GM2A stimulates the hydrolysis of sulfated glycosphingolipid SM2 and the ganglioside GM2. Functionally, hydrolyzes the non-reducing end N-acetyl-D-hexosamine and/or sulfated N-acetyl-D-hexosamine of glycoconjugates, such as the oligosaccharide moieties from proteins and neutral glycolipids, or from certain mucopolysaccharides. The isozyme S is as active as the isozyme A on the anionic bis-sulfated glycans, the chondroitin-6-sulfate trisaccharide (C6S-3), and the dermatan sulfate pentasaccharide, and the sulfated glycosphingolipid SM2. The isozyme B does not hydrolyze each of these substrates, however hydrolyzes efficiently neutral oligosaccharide. Only the isozyme A is responsible for the degradation of GM2 gangliosides in the presence of GM2A. The sequence is that of Beta-hexosaminidase subunit alpha from Pongo abelii (Sumatran orangutan).